Reading from the N-terminus, the 247-residue chain is Small ribosomal subunit protein uS3 (247 aa).

Residues 39 to 111 form the KH type-2 domain; it reads IYDFFDKKVR…NISIQVIELK (73 aa). Residues 221–247 are disordered; the sequence is EEMDLLNAPKDRRVRRGGERHASTKKN. Basic and acidic residues predominate over residues 236-247; the sequence is RGGERHASTKKN.

The protein belongs to the universal ribosomal protein uS3 family. Part of the 30S ribosomal subunit. Forms a tight complex with proteins S10 and S14.

Binds the lower part of the 30S subunit head. Binds mRNA in the 70S ribosome, positioning it for translation. This chain is Small ribosomal subunit protein uS3, found in Metamycoplasma arthritidis (strain 158L3-1) (Mycoplasma arthritidis).